The chain runs to 294 residues: N-acetylmuramic acid 6-phosphate etherase (294 aa).

An SIS domain is found at 54–217; it reads VIQSFEEEGR…STASMIGVGK (164 aa). The active-site Proton donor is E82. Residue E113 is part of the active site.

Belongs to the GCKR-like family. MurNAc-6-P etherase subfamily. As to quaternary structure, homodimer.

It catalyses the reaction N-acetyl-D-muramate 6-phosphate + H2O = N-acetyl-D-glucosamine 6-phosphate + (R)-lactate. It functions in the pathway amino-sugar metabolism; N-acetylmuramate degradation. Its function is as follows. Specifically catalyzes the cleavage of the D-lactyl ether substituent of MurNAc 6-phosphate, producing GlcNAc 6-phosphate and D-lactate. The chain is N-acetylmuramic acid 6-phosphate etherase from Bacillus anthracis (strain A0248).